Consider the following 308-residue polypeptide: UPF0282 protein STK_23220 (308 aa).

The protein belongs to the UPF0282 family.

This chain is UPF0282 protein STK_23220, found in Sulfurisphaera tokodaii (strain DSM 16993 / JCM 10545 / NBRC 100140 / 7) (Sulfolobus tokodaii).